We begin with the raw amino-acid sequence, 429 residues long: UDP-N-acetylglucosamine 1-carboxyvinyltransferase (429 aa).

22–23 (KN) is a phosphoenolpyruvate binding site. Residue Arg-102 participates in UDP-N-acetyl-alpha-D-glucosamine binding. The active-site Proton donor is the Cys-126. 2-(S-cysteinyl)pyruvic acid O-phosphothioketal is present on Cys-126. UDP-N-acetyl-alpha-D-glucosamine contacts are provided by residues 171–174 (KVSV), Asp-316, and Ile-338.

Belongs to the EPSP synthase family. MurA subfamily.

Its subcellular location is the cytoplasm. It catalyses the reaction phosphoenolpyruvate + UDP-N-acetyl-alpha-D-glucosamine = UDP-N-acetyl-3-O-(1-carboxyvinyl)-alpha-D-glucosamine + phosphate. Its pathway is cell wall biogenesis; peptidoglycan biosynthesis. Cell wall formation. Adds enolpyruvyl to UDP-N-acetylglucosamine. This Azorhizobium caulinodans (strain ATCC 43989 / DSM 5975 / JCM 20966 / LMG 6465 / NBRC 14845 / NCIMB 13405 / ORS 571) protein is UDP-N-acetylglucosamine 1-carboxyvinyltransferase.